Here is a 255-residue protein sequence, read N- to C-terminus: Cell division protein DivIB (255 aa).

Topologically, residues 1-30 are cytoplasmic; it reads MKNSKVIKLQDRVPKLKNQKKRNKPPVNHR. A helical transmembrane segment spans residues 31 to 51; that stretch reads LILYISILFLLVLFLIYFRSP. Residues 52–255 lie on the Extracellular side of the membrane; sequence LSNIKKISVF…FKYLDDEKKK (204 aa). Residues 53-121 enclose the POTRA domain; the sequence is SNIKKISVFG…NKIDIHIEEY (69 aa).

This sequence belongs to the FtsQ/DivIB family. DivIB subfamily.

The protein localises to the cell membrane. Functionally, cell division protein that may be involved in stabilizing or promoting the assembly of the division complex. This chain is Cell division protein DivIB, found in Bacillus cytotoxicus (strain DSM 22905 / CIP 110041 / 391-98 / NVH 391-98).